Here is a 182-residue protein sequence, read N- to C-terminus: Small ribosomal subunit protein uS9 (182 aa).

Belongs to the universal ribosomal protein uS9 family.

The sequence is that of Small ribosomal subunit protein uS9 from Corynebacterium efficiens (strain DSM 44549 / YS-314 / AJ 12310 / JCM 11189 / NBRC 100395).